We begin with the raw amino-acid sequence, 248 residues long: 5'-nucleotidase SurE (248 aa).

A divalent metal cation is bound by residues aspartate 8, aspartate 9, serine 39, and asparagine 91.

Belongs to the SurE nucleotidase family. Requires a divalent metal cation as cofactor.

Its subcellular location is the cytoplasm. It carries out the reaction a ribonucleoside 5'-phosphate + H2O = a ribonucleoside + phosphate. Functionally, nucleotidase that shows phosphatase activity on nucleoside 5'-monophosphates. The protein is 5'-nucleotidase SurE of Geotalea daltonii (strain DSM 22248 / JCM 15807 / FRC-32) (Geobacter daltonii).